The following is a 160-amino-acid chain: Putative oxygenase ATEG_00330 (160 aa).

The EthD domain occupies 24-100 (HYFGTALHAK…RNIAADPEFA (77 aa)).

Belongs to the tpcK family.

Its function is as follows. Putative oxygenase; part of the gene cluster that mediates the biosynthesis of isoflavipucine. The PKS part of the PKS-NRPS ATEG_00325 probably assembles a triketide from an acetyl starter and two malonyl-CoA extender units. The poly-beta-keto intermediate would then be fused to the leucine unit by the NRPS part. The resulting amide would be liberated from the PKS-NRPS through reductive release of the linear PKS-NRPS product from the enzyme complex. Further steps in isoflapucine synthesis include a cyclization step, an oxidation step, a hydrolysis step involving a trans-amidation, and an additional oxidation step, leading to flavipucine. Formation of isoflavipucine from flavipucine requires an unusual rearrangement. Alternative rearrangement reactions could build up rubrobramide, representing a branching of flavipucine biosynthesis. The enzymes involved in the post-PKS-NRPS steps have not been identified yet, but the putative oxygenases ATEG_003329 and ATEG_00330 encoded by the cluster could play a role. The polypeptide is Putative oxygenase ATEG_00330 (Aspergillus terreus (strain NIH 2624 / FGSC A1156)).